A 279-amino-acid polypeptide reads, in one-letter code: uncharacterized protein (279 aa).

This is an uncharacterized protein from Bacillus subtilis (strain 168).